Here is a 307-residue protein sequence, read N- to C-terminus: Protein phosphatase PTC7 homolog fig (307 aa).

A PPM-type phosphatase domain is found at 41–300 (VQGSSKDQQL…DDITVILASV (260 aa)). 3 residues coordinate Mn(2+): D77, G78, and D222.

This sequence belongs to the PP2C family. Mg(2+) serves as cofactor. Requires Mn(2+) as cofactor.

The enzyme catalyses O-phospho-L-seryl-[protein] + H2O = L-seryl-[protein] + phosphate. It catalyses the reaction O-phospho-L-threonyl-[protein] + H2O = L-threonyl-[protein] + phosphate. This chain is Protein phosphatase PTC7 homolog fig, found in Drosophila grimshawi (Hawaiian fruit fly).